Here is a 424-residue protein sequence, read N- to C-terminus: Histidine--tRNA ligase (424 aa).

Belongs to the class-II aminoacyl-tRNA synthetase family. Homodimer.

Its subcellular location is the cytoplasm. The enzyme catalyses tRNA(His) + L-histidine + ATP = L-histidyl-tRNA(His) + AMP + diphosphate + H(+). In Salmonella gallinarum (strain 287/91 / NCTC 13346), this protein is Histidine--tRNA ligase.